The sequence spans 79 residues: Sec-independent protein translocase protein TatA (79 aa).

Residues Met-1–Phe-21 traverse the membrane as a helical segment. The segment at Glu-48–Ser-79 is disordered. Residues Lys-66–Ser-79 show a composition bias toward basic and acidic residues.

The protein belongs to the TatA/E family. In terms of assembly, the Tat system comprises two distinct complexes: a TatABC complex, containing multiple copies of TatA, TatB and TatC subunits, and a separate TatA complex, containing only TatA subunits. Substrates initially bind to the TatABC complex, which probably triggers association of the separate TatA complex to form the active translocon.

Its subcellular location is the cell inner membrane. Functionally, part of the twin-arginine translocation (Tat) system that transports large folded proteins containing a characteristic twin-arginine motif in their signal peptide across membranes. TatA could form the protein-conducting channel of the Tat system. This is Sec-independent protein translocase protein TatA from Helicobacter pylori (strain P12).